The following is a 215-amino-acid chain: Small ribosomal subunit protein uS3 (215 aa).

The region spanning 39–107 is the KH type-2 domain; that stretch reads VRQYLQKKLA…PVHINIEEIR (69 aa).

The protein belongs to the universal ribosomal protein uS3 family. In terms of assembly, part of the 30S ribosomal subunit. Forms a tight complex with proteins S10 and S14.

Its function is as follows. Binds the lower part of the 30S subunit head. Binds mRNA in the 70S ribosome, positioning it for translation. This chain is Small ribosomal subunit protein uS3, found in Nitrosomonas europaea (strain ATCC 19718 / CIP 103999 / KCTC 2705 / NBRC 14298).